The chain runs to 188 residues: CXXC-type zinc finger protein 4 (188 aa).

The disordered stretch occupies residues 1–20 (MHRNDSQRLGKPGGAPESLQ). A CXXC-type zinc finger spans residues 122–163 (AKKKRKRCGVCVPCKRLINCGVCSSCRNRKTGHQICKFRKCE). Residues cysteine 129, cysteine 132, cysteine 135, cysteine 141, cysteine 144, cysteine 147, cysteine 157, and cysteine 162 each coordinate Zn(2+).

The protein localises to the cytoplasm. In terms of biological role, acts as a negative regulator of the Wnt signaling pathway required for anterior neural structure formation. Binds preferentially to DNA containing cytidine-phosphate-guanosine (CpG) dinucleotides over CpH (H=A, T, and C), hemimethylated-CpG and hemimethylated-hydroxymethyl-CpG. The chain is CXXC-type zinc finger protein 4 (cxxc4) from Xenopus tropicalis (Western clawed frog).